A 359-amino-acid chain; its full sequence is Phospho-N-acetylmuramoyl-pentapeptide-transferase (359 aa).

10 helical membrane-spanning segments follow: residues 26–46 (TIYG…WVIN), 73–93 (TMGG…WADL), 98–118 (ILIT…DDYL), 134–154 (FLVQ…CPDF), 166–186 (FTPD…VGTS), 197–217 (GLAI…AYVA), 234–254 (CGEI…FLWF), 261–281 (VFMG…IAVI), 286–306 (ILLL…IIQV), and 338–358 (IVRF…TLKI).

It belongs to the glycosyltransferase 4 family. MraY subfamily. Requires Mg(2+) as cofactor.

It localises to the cell inner membrane. The catalysed reaction is UDP-N-acetyl-alpha-D-muramoyl-L-alanyl-gamma-D-glutamyl-meso-2,6-diaminopimeloyl-D-alanyl-D-alanine + di-trans,octa-cis-undecaprenyl phosphate = di-trans,octa-cis-undecaprenyl diphospho-N-acetyl-alpha-D-muramoyl-L-alanyl-D-glutamyl-meso-2,6-diaminopimeloyl-D-alanyl-D-alanine + UMP. Its pathway is cell wall biogenesis; peptidoglycan biosynthesis. Functionally, catalyzes the initial step of the lipid cycle reactions in the biosynthesis of the cell wall peptidoglycan: transfers peptidoglycan precursor phospho-MurNAc-pentapeptide from UDP-MurNAc-pentapeptide onto the lipid carrier undecaprenyl phosphate, yielding undecaprenyl-pyrophosphoryl-MurNAc-pentapeptide, known as lipid I. The chain is Phospho-N-acetylmuramoyl-pentapeptide-transferase from Desulforapulum autotrophicum (strain ATCC 43914 / DSM 3382 / VKM B-1955 / HRM2) (Desulfobacterium autotrophicum).